The primary structure comprises 99 residues: Aspartyl/glutamyl-tRNA(Asn/Gln) amidotransferase subunit C (99 aa).

This sequence belongs to the GatC family. Heterotrimer of A, B and C subunits.

It carries out the reaction L-glutamyl-tRNA(Gln) + L-glutamine + ATP + H2O = L-glutaminyl-tRNA(Gln) + L-glutamate + ADP + phosphate + H(+). The enzyme catalyses L-aspartyl-tRNA(Asn) + L-glutamine + ATP + H2O = L-asparaginyl-tRNA(Asn) + L-glutamate + ADP + phosphate + 2 H(+). Allows the formation of correctly charged Asn-tRNA(Asn) or Gln-tRNA(Gln) through the transamidation of misacylated Asp-tRNA(Asn) or Glu-tRNA(Gln) in organisms which lack either or both of asparaginyl-tRNA or glutaminyl-tRNA synthetases. The reaction takes place in the presence of glutamine and ATP through an activated phospho-Asp-tRNA(Asn) or phospho-Glu-tRNA(Gln). The protein is Aspartyl/glutamyl-tRNA(Asn/Gln) amidotransferase subunit C of Mycolicibacterium vanbaalenii (strain DSM 7251 / JCM 13017 / BCRC 16820 / KCTC 9966 / NRRL B-24157 / PYR-1) (Mycobacterium vanbaalenii).